Consider the following 287-residue polypeptide: Undecaprenyl-diphosphatase (287 aa).

Transmembrane regions (helical) follow at residues 50–70 (PGVS…IAYF), 99–119 (IAMA…KLFW), 128–148 (LRSV…LAVA), 206–226 (FLLG…DALA), 231–251 (AGPL…WLAI), and 263–283 (TWLF…WWSI).

Belongs to the UppP family.

It is found in the cell inner membrane. It catalyses the reaction di-trans,octa-cis-undecaprenyl diphosphate + H2O = di-trans,octa-cis-undecaprenyl phosphate + phosphate + H(+). Its function is as follows. Catalyzes the dephosphorylation of undecaprenyl diphosphate (UPP). Confers resistance to bacitracin. The chain is Undecaprenyl-diphosphatase from Parasynechococcus marenigrum (strain WH8102).